The sequence spans 59 residues: UPF0434 protein HDEF_0234 (59 aa).

Belongs to the UPF0434 family.

The sequence is that of UPF0434 protein HDEF_0234 from Hamiltonella defensa subsp. Acyrthosiphon pisum (strain 5AT).